The sequence spans 132 residues: Small ribosomal subunit protein uS11 (132 aa).

The protein belongs to the universal ribosomal protein uS11 family. Part of the 30S ribosomal subunit. Interacts with proteins S7 and S18. Binds to IF-3.

In terms of biological role, located on the platform of the 30S subunit, it bridges several disparate RNA helices of the 16S rRNA. Forms part of the Shine-Dalgarno cleft in the 70S ribosome. The chain is Small ribosomal subunit protein uS11 from Legionella pneumophila (strain Paris).